Here is a 271-residue protein sequence, read N- to C-terminus: tRNA pseudouridine synthase A (271 aa).

The Nucleophile role is filled by Asp51. Tyr109 serves as a coordination point for substrate.

It belongs to the tRNA pseudouridine synthase TruA family. In terms of assembly, homodimer.

The enzyme catalyses uridine(38/39/40) in tRNA = pseudouridine(38/39/40) in tRNA. Functionally, formation of pseudouridine at positions 38, 39 and 40 in the anticodon stem and loop of transfer RNAs. In Methylococcus capsulatus (strain ATCC 33009 / NCIMB 11132 / Bath), this protein is tRNA pseudouridine synthase A.